The primary structure comprises 358 residues: Phosphoserine aminotransferase (358 aa).

Arg41 contacts L-glutamate. Pyridoxal 5'-phosphate-binding positions include 75 to 76 (AS), Trp100, Thr148, Asp167, and Gln190. At Lys191 the chain carries N6-(pyridoxal phosphate)lysine. 233–234 (NT) serves as a coordination point for pyridoxal 5'-phosphate.

It belongs to the class-V pyridoxal-phosphate-dependent aminotransferase family. SerC subfamily. As to quaternary structure, homodimer. Requires pyridoxal 5'-phosphate as cofactor.

Its subcellular location is the cytoplasm. It catalyses the reaction O-phospho-L-serine + 2-oxoglutarate = 3-phosphooxypyruvate + L-glutamate. The catalysed reaction is 4-(phosphooxy)-L-threonine + 2-oxoglutarate = (R)-3-hydroxy-2-oxo-4-phosphooxybutanoate + L-glutamate. It participates in amino-acid biosynthesis; L-serine biosynthesis; L-serine from 3-phospho-D-glycerate: step 2/3. Its pathway is cofactor biosynthesis; pyridoxine 5'-phosphate biosynthesis; pyridoxine 5'-phosphate from D-erythrose 4-phosphate: step 3/5. Catalyzes the reversible conversion of 3-phosphohydroxypyruvate to phosphoserine and of 3-hydroxy-2-oxo-4-phosphonooxybutanoate to phosphohydroxythreonine. This chain is Phosphoserine aminotransferase, found in Campylobacter lari (strain RM2100 / D67 / ATCC BAA-1060).